The chain runs to 141 residues: Large ribosomal subunit protein uL11 (141 aa).

The protein belongs to the universal ribosomal protein uL11 family. In terms of assembly, part of the ribosomal stalk of the 50S ribosomal subunit. Interacts with L10 and the large rRNA to form the base of the stalk. L10 forms an elongated spine to which L12 dimers bind in a sequential fashion forming a multimeric L10(L12)X complex. In terms of processing, one or more lysine residues are methylated.

In terms of biological role, forms part of the ribosomal stalk which helps the ribosome interact with GTP-bound translation factors. The polypeptide is Large ribosomal subunit protein uL11 (Clostridium botulinum (strain Alaska E43 / Type E3)).